Consider the following 274-residue polypeptide: MQNITQSWFVQGMIKATTDAWLKGWDERNGGNLTLRLDDADIAPYHDNFHAQPRYIPLSQPMPLLANTPFIVTGSGKFFRNVQLDPAANLGVVKVDSDGAGYHILWGLTHEAVPTSELPAHFLSHCERIKATNGKDRVIMHCHATNLIALTYVLENDTAVFTRQLWEGSTECLVVFPDGVGILPWMVPGTDEIGQATAQEMQKHSLVLWPFHGVFGSGPTLDETFGLIDTAEKSAQVLVKVYSMGGMKQTISREELIALGQRFGVTPLASALAL.

Glu117 is an active-site residue. Positions 141, 143, and 212 each coordinate Zn(2+).

This sequence belongs to the aldolase class II family. RhaD subfamily. Homotetramer. The cofactor is Zn(2+).

Its subcellular location is the cytoplasm. The catalysed reaction is L-rhamnulose 1-phosphate = (S)-lactaldehyde + dihydroxyacetone phosphate. Its pathway is carbohydrate degradation; L-rhamnose degradation; glycerone phosphate from L-rhamnose: step 3/3. Catalyzes the reversible cleavage of L-rhamnulose-1-phosphate to dihydroxyacetone phosphate (DHAP) and L-lactaldehyde. The sequence is that of Rhamnulose-1-phosphate aldolase from Escherichia coli O17:K52:H18 (strain UMN026 / ExPEC).